Consider the following 688-residue polypeptide: DNA topoisomerase 1 (688 aa).

The Toprim domain occupies 3–113 (ENLVIVESPA…TENRVVFNEI (111 aa)). E9 and D82 together coordinate Mg(2+). The Topo IA-type catalytic domain occupies 129–556 (EMELVDAQQA…FYSSFKQDVE (428 aa)). The interaction with DNA stretch occupies residues 163-168 (SAGRVQ). The active-site O-(5'-phospho-DNA)-tyrosine intermediate is the Y298. Residues 322 to 349 (YGNDYTSNRKSKGQGDQDAHEAIRPSST) are disordered. Positions 334–344 (GQGDQDAHEAI) are enriched in basic and acidic residues. 3 C4-type zinc fingers span residues 576-602 (CEVCGSPMVIKMGRYGKFMACSNFPDC), 616-644 (CPKCKEGDVVERKSKKNRIFYGCSKYPEC), and 657-680 (CPKCEHYLVEKKQGRKSQVVCSNC).

This sequence belongs to the type IA topoisomerase family. Monomer. It depends on Mg(2+) as a cofactor.

It carries out the reaction ATP-independent breakage of single-stranded DNA, followed by passage and rejoining.. Releases the supercoiling and torsional tension of DNA, which is introduced during the DNA replication and transcription, by transiently cleaving and rejoining one strand of the DNA duplex. Introduces a single-strand break via transesterification at a target site in duplex DNA. The scissile phosphodiester is attacked by the catalytic tyrosine of the enzyme, resulting in the formation of a DNA-(5'-phosphotyrosyl)-enzyme intermediate and the expulsion of a 3'-OH DNA strand. The free DNA strand then undergoes passage around the unbroken strand, thus removing DNA supercoils. Finally, in the religation step, the DNA 3'-OH attacks the covalent intermediate to expel the active-site tyrosine and restore the DNA phosphodiester backbone. The polypeptide is DNA topoisomerase 1 (Staphylococcus saprophyticus subsp. saprophyticus (strain ATCC 15305 / DSM 20229 / NCIMB 8711 / NCTC 7292 / S-41)).